The chain runs to 133 residues: ATP synthase epsilon chain, chloroplastic (133 aa).

It belongs to the ATPase epsilon chain family. As to quaternary structure, F-type ATPases have 2 components, CF(1) - the catalytic core - and CF(0) - the membrane proton channel. CF(1) has five subunits: alpha(3), beta(3), gamma(1), delta(1), epsilon(1). CF(0) has three main subunits: a, b and c.

The protein localises to the plastid. Its subcellular location is the chloroplast thylakoid membrane. Produces ATP from ADP in the presence of a proton gradient across the membrane. This is ATP synthase epsilon chain, chloroplastic from Mesostigma viride (Green alga).